The primary structure comprises 409 residues: 8-amino-7-oxononanoate synthase (409 aa).

Arg20 contacts substrate. A pyridoxal 5'-phosphate-binding site is contributed by 116 to 117; the sequence is GY. His141 contacts substrate. 3 residues coordinate pyridoxal 5'-phosphate: Ser187, His215, and Thr243. Residue Lys246 is modified to N6-(pyridoxal phosphate)lysine. Thr369 provides a ligand contact to substrate.

It belongs to the class-II pyridoxal-phosphate-dependent aminotransferase family. BioF subfamily. In terms of assembly, homodimer. It depends on pyridoxal 5'-phosphate as a cofactor.

The enzyme catalyses 6-carboxyhexanoyl-[ACP] + L-alanine + H(+) = (8S)-8-amino-7-oxononanoate + holo-[ACP] + CO2. The protein operates within cofactor biosynthesis; biotin biosynthesis. Catalyzes the decarboxylative condensation of pimeloyl-[acyl-carrier protein] and L-alanine to produce 8-amino-7-oxononanoate (AON), [acyl-carrier protein], and carbon dioxide. The chain is 8-amino-7-oxononanoate synthase from Polaromonas naphthalenivorans (strain CJ2).